We begin with the raw amino-acid sequence, 487 residues long: Kynureninase 1 (487 aa).

Residues Leu149, Thr150, Phe177 to Asp180, Ser234, Asp263, His266, and Tyr288 contribute to the pyridoxal 5'-phosphate site. Lys289 bears the N6-(pyridoxal phosphate)lysine mark. Positions 329 and 357 each coordinate pyridoxal 5'-phosphate.

It belongs to the kynureninase family. Homodimer. Requires pyridoxal 5'-phosphate as cofactor.

The protein localises to the cytoplasm. It catalyses the reaction L-kynurenine + H2O = anthranilate + L-alanine + H(+). The enzyme catalyses 3-hydroxy-L-kynurenine + H2O = 3-hydroxyanthranilate + L-alanine + H(+). It functions in the pathway amino-acid degradation; L-kynurenine degradation; L-alanine and anthranilate from L-kynurenine: step 1/1. It participates in cofactor biosynthesis; NAD(+) biosynthesis; quinolinate from L-kynurenine: step 2/3. Catalyzes the cleavage of L-kynurenine (L-Kyn) and L-3-hydroxykynurenine (L-3OHKyn) into anthranilic acid (AA) and 3-hydroxyanthranilic acid (3-OHAA), respectively. This is Kynureninase 1 (bna5-1) from Emericella nidulans (strain FGSC A4 / ATCC 38163 / CBS 112.46 / NRRL 194 / M139) (Aspergillus nidulans).